We begin with the raw amino-acid sequence, 76 residues long: Large ribosomal subunit protein bL31 (76 aa).

It belongs to the bacterial ribosomal protein bL31 family. Type A subfamily. As to quaternary structure, part of the 50S ribosomal subunit.

In terms of biological role, binds the 23S rRNA. In Picosynechococcus sp. (strain ATCC 27264 / PCC 7002 / PR-6) (Agmenellum quadruplicatum), this protein is Large ribosomal subunit protein bL31.